The following is a 235-amino-acid chain: Ubiquinone biosynthesis O-methyltransferase (235 aa).

4 residues coordinate S-adenosyl-L-methionine: arginine 39, glycine 59, aspartate 80, and methionine 124.

This sequence belongs to the methyltransferase superfamily. UbiG/COQ3 family.

The enzyme catalyses a 3-demethylubiquinol + S-adenosyl-L-methionine = a ubiquinol + S-adenosyl-L-homocysteine + H(+). The catalysed reaction is a 3-(all-trans-polyprenyl)benzene-1,2-diol + S-adenosyl-L-methionine = a 2-methoxy-6-(all-trans-polyprenyl)phenol + S-adenosyl-L-homocysteine + H(+). Its pathway is cofactor biosynthesis; ubiquinone biosynthesis. O-methyltransferase that catalyzes the 2 O-methylation steps in the ubiquinone biosynthetic pathway. This chain is Ubiquinone biosynthesis O-methyltransferase, found in Vibrio campbellii (strain ATCC BAA-1116).